The primary structure comprises 174 residues: Elongation factor Tu, mitochondrial (174 aa).

Residue 62 to 66 coordinates GTP; it reads DCPGH. K78 is subject to N6-succinyllysine. T103 bears the Phosphothreonine mark. S121 carries the phosphoserine modification. The residue at position 161 (K161) is an N6-acetyllysine.

This sequence belongs to the GTP-binding elongation factor family. EF-Tu/EF-1A subfamily.

Its subcellular location is the mitochondrion. The catalysed reaction is GTP + H2O = GDP + phosphate + H(+). In terms of biological role, GTP hydrolase that promotes the GTP-dependent binding of aminoacyl-tRNA to the A-site of ribosomes during protein biosynthesis. This Mesocricetus auratus (Golden hamster) protein is Elongation factor Tu, mitochondrial.